The primary structure comprises 157 residues: Transcription elongation factor GreA (157 aa).

A coiled-coil region spans residues 46-67 (AEYHAARERQSFIEGRIKELED).

It belongs to the GreA/GreB family.

In terms of biological role, necessary for efficient RNA polymerase transcription elongation past template-encoded arresting sites. The arresting sites in DNA have the property of trapping a certain fraction of elongating RNA polymerases that pass through, resulting in locked ternary complexes. Cleavage of the nascent transcript by cleavage factors such as GreA or GreB allows the resumption of elongation from the new 3'terminus. GreA releases sequences of 2 to 3 nucleotides. The sequence is that of Transcription elongation factor GreA from Rhodospirillum rubrum (strain ATCC 11170 / ATH 1.1.1 / DSM 467 / LMG 4362 / NCIMB 8255 / S1).